A 649-amino-acid chain; its full sequence is Beta-galactosidase-1-like protein 3 (649 aa).

E203 serves as the catalytic Proton donor. The Nucleophile role is filled by E277.

It belongs to the glycosyl hydrolase 35 family.

This Mus musculus (Mouse) protein is Beta-galactosidase-1-like protein 3 (Glb1l3).